The sequence spans 133 residues: Vesicle transport protein GOT1A (133 aa).

At 1–9 the chain is on the cytoplasmic side; the sequence is MISITEWQK. A helical membrane pass occupies residues 10-30; the sequence is IGVGITGFGVFFILFGILLYF. A topological domain (lumenal) is located at residue D31. A helical transmembrane segment spans residues 32 to 52; that stretch reads SVLLAFGNLLFLTGLSLIIGL. Topologically, residues 53–68 are cytoplasmic; sequence RRTFAFFFQRHKLKGT. Residues 69–89 form a helical membrane-spanning segment; sequence SFFLGGVAIVLLRWPLLGMLL. The Lumenal segment spans residues 90–92; it reads EAY. A helical transmembrane segment spans residues 93–113; that stretch reads GFISLFKGFFPVVFGFLGSAF. The Cytoplasmic segment spans residues 114–133; sequence NIPFLSTLFQKLQGSSSSMV.

This sequence belongs to the GOT1 family.

It localises to the golgi apparatus membrane. May be involved in fusion of ER-derived transport vesicles with the Golgi complex. This chain is Vesicle transport protein GOT1A, found in Mus musculus (Mouse).